The following is a 614-amino-acid chain: Dihydroxy-acid dehydratase (614 aa).

Asp81 serves as a coordination point for Mg(2+). [2Fe-2S] cluster is bound at residue Cys122. Residues Asp123 and Lys124 each contribute to the Mg(2+) site. Lys124 carries the post-translational modification N6-carboxylysine. Cys193 is a [2Fe-2S] cluster binding site. Position 489 (Glu489) interacts with Mg(2+). Ser515 acts as the Proton acceptor in catalysis.

It belongs to the IlvD/Edd family. In terms of assembly, homodimer. It depends on [2Fe-2S] cluster as a cofactor. Mg(2+) serves as cofactor.

The catalysed reaction is (2R)-2,3-dihydroxy-3-methylbutanoate = 3-methyl-2-oxobutanoate + H2O. It carries out the reaction (2R,3R)-2,3-dihydroxy-3-methylpentanoate = (S)-3-methyl-2-oxopentanoate + H2O. Its pathway is amino-acid biosynthesis; L-isoleucine biosynthesis; L-isoleucine from 2-oxobutanoate: step 3/4. It functions in the pathway amino-acid biosynthesis; L-valine biosynthesis; L-valine from pyruvate: step 3/4. In terms of biological role, functions in the biosynthesis of branched-chain amino acids. Catalyzes the dehydration of (2R,3R)-2,3-dihydroxy-3-methylpentanoate (2,3-dihydroxy-3-methylvalerate) into 2-oxo-3-methylpentanoate (2-oxo-3-methylvalerate) and of (2R)-2,3-dihydroxy-3-methylbutanoate (2,3-dihydroxyisovalerate) into 2-oxo-3-methylbutanoate (2-oxoisovalerate), the penultimate precursor to L-isoleucine and L-valine, respectively. The chain is Dihydroxy-acid dehydratase from Hahella chejuensis (strain KCTC 2396).